Reading from the N-terminus, the 73-residue chain is Small ribosomal subunit protein bS21 (73 aa).

Belongs to the bacterial ribosomal protein bS21 family.

This chain is Small ribosomal subunit protein bS21, found in Parvibaculum lavamentivorans (strain DS-1 / DSM 13023 / NCIMB 13966).